The following is a 197-amino-acid chain: Large ribosomal subunit protein bL25 (197 aa).

This sequence belongs to the bacterial ribosomal protein bL25 family. CTC subfamily. Part of the 50S ribosomal subunit; part of the 5S rRNA/L5/L18/L25 subcomplex. Contacts the 5S rRNA. Binds to the 5S rRNA independently of L5 and L18.

Functionally, this is one of the proteins that binds to the 5S RNA in the ribosome where it forms part of the central protuberance. This is Large ribosomal subunit protein bL25 from Citrifermentans bemidjiense (strain ATCC BAA-1014 / DSM 16622 / JCM 12645 / Bem) (Geobacter bemidjiensis).